A 377-amino-acid polypeptide reads, in one-letter code: Caspase-4 (377 aa).

The interval 1-59 (MAEGNHRKKPLKVLESLGKDFLTGVLDNLVEQNVLNWKEEEKKKYYDAKTEDKVRVMAD) is required for LPS-binding. Positions 1–80 (MAEGNHRKKP…MLLQTFFNID (80 aa)) are excised as a propeptide. Positions 1 to 91 (MAEGNHRKKP…ISPNKKAHPN (91 aa)) constitute a CARD domain. At Ala-2 the chain carries N-acetylalanine. Residue Ser-83 is modified to Phosphoserine. The segment at 84–104 (PNKKAHPNMEAGPPESGESTD) is disordered. Catalysis depends on residues His-210 and Cys-258. A propeptide spanning residues 271–289 (SPASLEVASSQSSENLEED) is cleaved from the precursor. (Microbial infection) ADP-riboxanated arginine is present on Arg-314.

This sequence belongs to the peptidase C14A family. Heterotetramer that consists of two anti-parallel arranged heterodimers, each one formed by a 20 kDa (Caspase-4 subunit p20) and a 10 kDa (Caspase-4 subunit p10) subunit. Upon direct LPS-binding, forms large homooligomers, resulting in its activation. These oligomers are often referred to as 'non-canonical inflammasomes'. In its precursor form, interacts with TMEM214; this interaction is required for association with the endoplasmic reticulum membrane. Interacts with CASP1. Interacts with NOD2. Interacts with SERPINB1; this interaction regulates CASP4 activity. In terms of assembly, heterotetramer that consists of two anti-parallel arranged heterodimers, each one formed by a 20 kDa (Caspase-4 subunit p20) and a 10 kDa (Caspase-4 subunit p10) subunit. As to quaternary structure, (Microbial infection) Interacts with NleF protein from pathogenic E.coli; this interaction leads to enzyme inhibition. (Microbial infection) Interacts with cathepsin CTSG; the interaction is promoted by the Td92 surface protein of the periodontal pathogen T.denticola and leads to CASP4 activation. In terms of processing, in response to activation signals, undergoes autoproteolytic cleavage and activation. Post-translationally, (Microbial infection) ADP-riboxanation by S.flexneri OspC3 blocks CASP4 autoprocessing, preventing CASP4 activation and ability to recognize and cleave GSDMD, thereby thwarting the inflammasome/pyroptosis-mediated defense. As to expression, widely expressed, including in keratinocytes and colonic and small intestinal epithelial cells (at protein level). Not detected in brain.

It is found in the cytoplasm. It localises to the cytosol. The protein localises to the endoplasmic reticulum membrane. Its subcellular location is the mitochondrion. The protein resides in the inflammasome. It is found in the secreted. It carries out the reaction Strict requirement for Asp at the P1 position. It has a preferred cleavage sequence of Tyr-Val-Ala-Asp-|- but also cleaves at Asp-Glu-Val-Asp-|-.. Its activity is regulated as follows. Activated by homooligomerization induced by direct binding to cytosolic LPS, in a TLR4-independent manner. In addition to LPS, CASP4/CASP11 may also be activated by oxidized phospholipid 1-palmitoyl-2-arachidonoyl- sn-glycero-3-phosphorylcholine, an oxidized phospholipid (oxPAPC), in dendritic cells, promoting adaptive immunity. The role of oxPAPC is however unclear and another report suggests that oxPAPC competes with LPS-binding and inhibits the non-canonical inflammasome in macrophages. In terms of biological role, inflammatory caspase that acts as the effector of the non-canonical inflammasome by mediating lipopolysaccharide (LPS)-induced pyroptosis. Also indirectly activates the NLRP3 and NLRP6 inflammasomes. Acts as a thiol protease that cleaves a tetrapeptide after an Asp residue at position P1: catalyzes cleavage of CGAS, GSDMD and IL18. Effector of the non-canonical inflammasome independently of NLRP3 inflammasome and CASP1: the non-canonical inflammasome promotes pyroptosis through GSDMD cleavage without involving secretion of cytokine IL1B. In the non-canonical inflammasome, CASP4 is activated by direct binding to the lipid A moiety of LPS without the need of an upstream sensor. LPS-binding promotes CASP4 activation and CASP4-mediated cleavage of GSDMD and IL18, followed by IL18 secretion through the GSDMD pore, pyroptosis of infected cells and their extrusion into the gut lumen. Also indirectly promotes secretion of mature cytokines (IL1A and HMGB1) downstream of GSDMD-mediated pyroptosis via activation of the NLRP3 and NLRP6 inflammasomes. Involved in NLRP3-dependent CASP1 activation and IL1B secretion in response to non-canonical activators, such as UVB radiation or cholera enterotoxin. Involved in NLRP6 inflammasome-dependent activation in response to lipoteichoic acid (LTA), a cell-wall component of Gram-positive bacteria, which leads to CASP1 activation and IL1B secretion. Involved in LPS-induced IL6 secretion; this activity may not require caspase enzymatic activity. The non-canonical inflammasome is required for innate immunity to cytosolic, but not vacuolar, bacteria. Plays a crucial role in the restriction of S.typhimurium replication in colonic epithelial cells during infection. Activation of the non-canonical inflammasome in brain endothelial cells can lead to excessive pyroptosis, leading to blood-brain barrier breakdown. Pyroptosis limits bacterial replication, while cytokine secretion promotes the recruitment and activation of immune cells and triggers mucosal inflammation. May also act as an activator of adaptive immunity in dendritic cells, following activation by oxidized phospholipid 1-palmitoyl-2-arachidonoyl- sn-glycero-3-phosphorylcholine, an oxidized phospholipid (oxPAPC). Involved in cell death induced by endoplasmic reticulum stress and by treatment with cytotoxic APP peptides found in Alzheimer's patient brains. Cleavage of GSDMD is not strictly dependent on the consensus cleavage site but depends on an exosite interface on CASP4 that recognizes and binds the Gasdermin-D, C-terminal (GSDMD-CT) part. Catalyzes cleavage and maturation of IL18; IL18 processing also depends of the exosite interface on CASP4. In contrast, it does not directly process IL1B. During non-canonical inflammasome activation, cuts CGAS and may play a role in the regulation of antiviral innate immune activation. (Microbial infection) In response to the Td92 surface protein of the periodontal pathogen T.denticola, activated by cathepsin CTSG which leads to production and secretion of IL1A and pyroptosis of gingival fibroblasts. This chain is Caspase-4, found in Homo sapiens (Human).